The chain runs to 209 residues: Large ribosomal subunit protein uL4 (209 aa).

Positions 45 to 77 (RQGTHKAKERAEVTGSTRKIKKQKGTGTARAGS) are disordered.

The protein belongs to the universal ribosomal protein uL4 family. As to quaternary structure, part of the 50S ribosomal subunit.

One of the primary rRNA binding proteins, this protein initially binds near the 5'-end of the 23S rRNA. It is important during the early stages of 50S assembly. It makes multiple contacts with different domains of the 23S rRNA in the assembled 50S subunit and ribosome. Functionally, forms part of the polypeptide exit tunnel. The chain is Large ribosomal subunit protein uL4 from Flavobacterium johnsoniae (strain ATCC 17061 / DSM 2064 / JCM 8514 / BCRC 14874 / CCUG 350202 / NBRC 14942 / NCIMB 11054 / UW101) (Cytophaga johnsonae).